The following is a 434-amino-acid chain: Asparagine--tRNA ligase (434 aa).

It belongs to the class-II aminoacyl-tRNA synthetase family.

The protein localises to the cytoplasm. It catalyses the reaction tRNA(Asn) + L-asparagine + ATP = L-asparaginyl-tRNA(Asn) + AMP + diphosphate + H(+). The chain is Asparagine--tRNA ligase from Pyrococcus abyssi (strain GE5 / Orsay).